The following is a 102-amino-acid chain: Small ribosomal subunit protein uS10 (102 aa).

This sequence belongs to the universal ribosomal protein uS10 family. As to quaternary structure, part of the 30S ribosomal subunit.

In terms of biological role, involved in the binding of tRNA to the ribosomes. In Macrococcus caseolyticus (strain JCSC5402) (Macrococcoides caseolyticum), this protein is Small ribosomal subunit protein uS10.